A 483-amino-acid chain; its full sequence is Krueppel-like factor 4 (483 aa).

The interval 22–42 is disordered; that stretch reads TFASGPAGREKTLRPAGAPTN. Lys32 participates in a covalent cross-link: Glycyl lysine isopeptide (Lys-Gly) (interchain with G-Cter in ubiquitin). A 9aaTAD motif is present at residues 99–107; sequence DLLDLDFIL. Ser251 bears the Phosphoserine mark. The disordered stretch occupies residues 294 to 395; it reads AGPQLSNGHR…KRGRRSWPRK (102 aa). Positions 338–356 are enriched in pro residues; it reads LPLPPGFHPHPGPNYPPFL. A 5-glutamyl polyglutamate modification is found at Glu381. A compositionally biased stretch (basic residues) spans 386–395; that stretch reads KRGRRSWPRK. The interval 386 to 483 is interaction with ZNF296; sequence KRGRRSWPRK…HLALHMKRHF (98 aa). 3 C2H2-type zinc fingers span residues 400–424, 430–454, and 460–482; these read HTCDYAGCGKTYTKSSHLKAHLRTH, YHCDWDGCGWKFARSDELTRHYRKH, and FQCQKCDRAFSRSDHLALHMKRH. The interaction with target DNA stretch occupies residues 443–474; that stretch reads RSDELTRHYRKHTGHRPFQCQKCDRAFSRSDH.

It belongs to the krueppel C2H2-type zinc-finger protein family. Interacts with MUC1 (via the C-terminal domain). Interacts with POU5F1/OCT4 and SOX2. Interacts with MEIS2 isoform MeisD and PBX1 isoform PBX1a. Interacts with ZNF296. Interacts with GLIS1. Interacts with BTRC; this interaction leads to KLF4 ubiquitination and subsequent degradation. Interacts with IPO7; the interaction facilitates nuclear translocation of KLF4 in dental papilla cells. In terms of processing, ubiquitinated. 'Lys-48'-linked ubiquitinated and targeted for proteasomal degradation by the SCF(BTRC) E3 ubiquitin-protein ligase complex, thereby negatively regulating cell pluripotency maintenance and embryogenesis. Polyglutamylated by TTLL1 and TTLL4 at Glu-381, which inhibits KLF4 binding with E3 ligase component BTRC, thereby impeding ubiquitination. Deglutamylated by CCP1 and CCP6; deglutamylation promotes KLF4 ubiquitination. KLF4 glutamylation state plays a critical role in the regulation of its function in cell reprogramming, pluripotency maintenance and embryogenesis. Highest expression in the colon. Lower levels in testis, lung and small intestine.

The protein resides in the nucleus. Its subcellular location is the cytoplasm. Functionally, transcription factor; can act both as activator and as repressor. Binds the 5'-CACCC-3' core sequence. Binds to the promoter region of its own gene and can activate its own transcription. Regulates the expression of key transcription factors during embryonic development. Plays an important role in maintaining embryonic stem cells, and in preventing their differentiation. Required for establishing the barrier function of the skin and for postnatal maturation and maintenance of the ocular surface. Involved in the differentiation of epithelial cells and may also function in skeletal and kidney development. Contributes to the down-regulation of p53/TP53 transcription. In Mus musculus (Mouse), this protein is Krueppel-like factor 4 (Klf4).